Here is a 377-residue protein sequence, read N- to C-terminus: Endolytic peptidoglycan transglycosylase RlpA (377 aa).

The signal sequence occupies residues methionine 1–alanine 19. Residue cysteine 20 is the site of N-palmitoyl cysteine attachment. Cysteine 20 is lipidated: S-diacylglycerol cysteine. Positions leucine 196 to alanine 277 are disordered. 2 stretches are compositionally biased toward low complexity: residues serine 208–glycine 218 and proline 264–alanine 277. The SPOR domain occupies alanine 300–alanine 376.

The protein belongs to the RlpA family.

Its subcellular location is the cell membrane. Its function is as follows. Lytic transglycosylase with a strong preference for naked glycan strands that lack stem peptides. In Salmonella typhi, this protein is Endolytic peptidoglycan transglycosylase RlpA.